The following is a 505-amino-acid chain: ATP synthase subunit alpha (505 aa).

170–177 is an ATP binding site; sequence GDRQTGKT.

It belongs to the ATPase alpha/beta chains family. As to quaternary structure, F-type ATPases have 2 components, CF(1) - the catalytic core - and CF(0) - the membrane proton channel. CF(1) has five subunits: alpha(3), beta(3), gamma(1), delta(1), epsilon(1). CF(0) has four main subunits: a, b, b' and c.

The protein resides in the cellular thylakoid membrane. It carries out the reaction ATP + H2O + 4 H(+)(in) = ADP + phosphate + 5 H(+)(out). Produces ATP from ADP in the presence of a proton gradient across the membrane. The alpha chain is a regulatory subunit. The protein is ATP synthase subunit alpha of Cyanothece sp. (strain PCC 7425 / ATCC 29141).